The following is a 124-amino-acid chain: Small ribosomal subunit protein uS12 (124 aa).

Residues 1–28 (MPTISQLIGSERKRLTRKTKSPALKSCP) are disordered. Aspartate 89 is modified (3-methylthioaspartic acid). The tract at residues 104 to 124 (TAGVKDRRQSRSKYGAKAPKD) is disordered.

It belongs to the universal ribosomal protein uS12 family. Part of the 30S ribosomal subunit. Contacts proteins S8 and S17. May interact with IF1 in the 30S initiation complex.

In terms of biological role, with S4 and S5 plays an important role in translational accuracy. Its function is as follows. Interacts with and stabilizes bases of the 16S rRNA that are involved in tRNA selection in the A site and with the mRNA backbone. Located at the interface of the 30S and 50S subunits, it traverses the body of the 30S subunit contacting proteins on the other side and probably holding the rRNA structure together. The combined cluster of proteins S8, S12 and S17 appears to hold together the shoulder and platform of the 30S subunit. In Prochlorococcus marinus (strain MIT 9312), this protein is Small ribosomal subunit protein uS12.